The following is an 858-amino-acid chain: Elongation factor 2 (858 aa).

Positions 17-362 constitute a tr-type G domain; the sequence is ANIRNMSVIA…MITIHLPSPV (346 aa). 26–33 provides a ligand contact to GTP; it reads AHVDHGKS. The residue at position 54 (threonine 54) is a Phosphothreonine. Residue threonine 57 is modified to Phosphothreonine; by EEF2K. Phosphothreonine is present on threonine 59. An N6-succinyllysine modification is found at lysine 152. GTP is bound by residues 158 to 161 and 216 to 218; these read NKMD and SGL. Residue lysine 235 is modified to N6-acetyllysine. At lysine 239 the chain carries N6-acetyllysine; alternate. Residue lysine 239 forms a Glycyl lysine isopeptide (Lys-Gly) (interchain with G-Cter in SUMO1); alternate linkage. Tyrosine 265 carries the phosphotyrosine; by CSK modification. Lysine 272 is subject to N6-acetyllysine; alternate. The residue at position 272 (lysine 272) is an N6-succinyllysine; alternate. The residue at position 275 (lysine 275) is an N6-acetyllysine. Lysine 322 is covalently cross-linked (Glycyl lysine isopeptide (Lys-Gly) (interchain with G-Cter in SUMO)). Serine 325 carries the phosphoserine modification. Residue tyrosine 373 is modified to Phosphotyrosine; by CSK. At threonine 435 the chain carries Phosphothreonine. 2 positions are modified to N6-acetyllysine: lysine 439 and lysine 445. The residue at position 502 (serine 502) is a Phosphoserine. At lysine 525 the chain carries N6,N6,N6-trimethyllysine; by EEF2KMT. Lysine 529 participates in a covalent cross-link: Glycyl lysine isopeptide (Lys-Gly) (interchain with G-Cter in SUMO). Lysine 572 is subject to N6-succinyllysine. Serine 595 carries the post-translational modification Phosphoserine; by CDK2. An N6-acetyllysine modification is found at lysine 619. Histidine 715 is modified (diphthamide).

It belongs to the TRAFAC class translation factor GTPase superfamily. Classic translation factor GTPase family. EF-G/EF-2 subfamily. Binds to 80S ribosomes. Actively translating ribosomes show mutually exclusive binding of eIF5a (EIF5A or EIF5A2) and EEF2/eEF2. Interacts with SERBP1; interaction sequesters EEF2/eEF2 at the A-site of the ribosome, thereby blocking the interaction sites of the mRNA-tRNA complex, promoting ribosome stabilization and hibernation. Interacts with HABP4; interaction takes place at the A-site of hibernating ribosomes and promotes ribosome stabilization. Component of the mRNA surveillance SURF complex, at least composed of ERF1, ERF3 (ERF3A or ERF3B), EEF2, UPF1/RENT1, SMG1, SMG8 and SMG9. Interacts with RBPMS2. In terms of processing, phosphorylation by EF-2 kinase completely inactivates EF-2; it requires prior phosphorylation by CDK2 at Ser-595 during mitotic prometaphase. Phosphorylation by CSK promotes SUMOylation, proteolytic cleavage, and nuclear translocation if the C-terminal fragment. Post-translationally, diphthamide is 2-[3-carboxyamido-3-(trimethyl-ammonio)propyl]histidine. ISGylated. In terms of processing, proteolytically processed at two sites following phosphorylation by CSK. Post-translationally, SUMOylated following phosphorylation by CSK, promotes proteolytic cleavage.

The protein localises to the cytoplasm. It is found in the nucleus. It carries out the reaction GTP + H2O = GDP + phosphate + H(+). Functionally, catalyzes the GTP-dependent ribosomal translocation step during translation elongation. During this step, the ribosome changes from the pre-translocational (PRE) to the post-translocational (POST) state as the newly formed A-site-bound peptidyl-tRNA and P-site-bound deacylated tRNA move to the P and E sites, respectively. Catalyzes the coordinated movement of the two tRNA molecules, the mRNA and conformational changes in the ribosome. The polypeptide is Elongation factor 2 (EEF2) (Bos taurus (Bovine)).